A 384-amino-acid polypeptide reads, in one-letter code: Calreticulin-3 (384 aa).

The N-terminal stretch at 1–19 is a signal peptide; the sequence is MARALVQLWAICMLRVALA. The tract at residues 20–197 is N-domain; the sequence is TVYFQEEFLD…GQSIESGSIE (178 aa). The N-linked (GlcNAc...) asparagine glycan is linked to Asn42. A disulfide bridge links Cys105 with Cys137. Residues Tyr109, Lys111, Tyr128, and Asp135 each contribute to the an alpha-D-glucoside site. 7 consecutive repeat copies span residues 191–202, 208–219, 221–230, 234–245, 249–259, 263–271, and 273–283. The tract at residues 191-245 is 4 X approximate repeats; it reads IESGSIEYDWNLTSLKKETSPAESKDWEQTKDNKAQDWEKHFLDASTSKQSDWNG. Positions 198–294 are P-domain; the sequence is YDWNLTSLKK…YLTQYDLSEF (97 aa). N-linked (GlcNAc...) asparagine glycosylation occurs at Asn201. Residues 249 to 283 are 3 X approximate repeats; the sequence is GDWPAPMLQKPPYQDGLKPEGIHKDVWLHRKMKNT. The interval 295 to 384 is C-domain; the sequence is ENIGAIGLEL…FNQFHRRNEL (90 aa). Glu303 contributes to the an alpha-D-glucoside binding site. Residues 381–384 carry the Prevents secretion from ER motif; the sequence is RNEL.

It belongs to the calreticulin family. In terms of assembly, component of an EIF2 complex at least composed of CELF1/CUGBP1, CALR, CALR3, EIF2S1, EIF2S2, HSP90B1 and HSPA5. As to expression, testis specific.

It localises to the endoplasmic reticulum lumen. In terms of biological role, during spermatogenesis, may act as a lectin-independent chaperone for specific client proteins such as ADAM3. Required for sperm fertility. CALR3 capacity for calcium-binding may be absent or much lower than that of CALR. The chain is Calreticulin-3 (CALR3) from Homo sapiens (Human).